A 324-amino-acid chain; its full sequence is Quinolinate synthase 1 (324 aa).

The iminosuccinate site is built by H48 and S66. Position 111 (C111) interacts with [4Fe-4S] cluster. Iminosuccinate contacts are provided by residues 137 to 139 (YVN) and S154. C196 contacts [4Fe-4S] cluster. Residues 222–224 (HPE) and T239 each bind iminosuccinate. C282 is a [4Fe-4S] cluster binding site.

This sequence belongs to the quinolinate synthase family. Type 2 subfamily. The cofactor is [4Fe-4S] cluster.

Its subcellular location is the cytoplasm. It carries out the reaction iminosuccinate + dihydroxyacetone phosphate = quinolinate + phosphate + 2 H2O + H(+). Its pathway is cofactor biosynthesis; NAD(+) biosynthesis; quinolinate from iminoaspartate: step 1/1. Functionally, catalyzes the condensation of iminoaspartate with dihydroxyacetone phosphate to form quinolinate. The chain is Quinolinate synthase 1 from Mesorhizobium japonicum (strain LMG 29417 / CECT 9101 / MAFF 303099) (Mesorhizobium loti (strain MAFF 303099)).